The following is a 581-amino-acid chain: MNLFSDIRTLVIGALAQMEQAGELPAGLDTANVTVEPPRDAAHGDMATNAAMVLAKPAGKKPRDIAEALAARLAADPRIASAEVAGPGFLNLRLVSGEWQSVVRAALAEGGDYGRSEMGRGQRINVEFVSANPTGPMHVGHTRGAVFGDALAALLDFSGHEVTREYYINDGGAQVDVLARSAYERYREANGLEPEIREGLYPGDYLIPVGEALKTKYGETLLDKPEEEWLAEVRDFATRAMMDMIREDLALLNVHMDVFSSEKALYGTGRIEAAIERLRQAGLIYEGVLEPPKGKTPEDWEPREQTLFRSTAHGDDVDRPVKKSDGSWTYFAPDIAYHWDKIERGYDALIDVFGADHGGYVKRMTAAVKALSDGRVPLDVKLIQLVRLFKNGEPFKMSKRAGTFVTLRDVVEQAGADVTRFHMLTRKNDAALDFDFARVLEQSKDNPVWYVQYASARVNSVLNKAAGMGVDTTDAALAQADLAQLSHPAELELARKVAEWPRTVEIAARAHEPHRIAFFLYDIASELHSLWNRGNDEPALRFLQEGDPAAMAAKIALARSVGVVISAGLGILGVTPAKEMR.

A 'HIGH' region motif is present at residues A131 to H141.

It belongs to the class-I aminoacyl-tRNA synthetase family. In terms of assembly, monomer.

Its subcellular location is the cytoplasm. The enzyme catalyses tRNA(Arg) + L-arginine + ATP = L-arginyl-tRNA(Arg) + AMP + diphosphate. The polypeptide is Arginine--tRNA ligase (Paracoccus denitrificans (strain Pd 1222)).